We begin with the raw amino-acid sequence, 331 residues long: ADP-L-glycero-D-manno-heptose-6-epimerase (331 aa).

NADP(+) is bound by residues 11–12 (FI), 32–33 (DN), lysine 39, lysine 54, 75–79 (EGACS), and asparagine 92. Tyrosine 139 (proton acceptor) is an active-site residue. NADP(+) is bound at residue lysine 143. Asparagine 168 lines the substrate pocket. Positions 169 and 177 each coordinate NADP(+). The active-site Proton acceptor is the lysine 177. Substrate is bound by residues arginine 179, histidine 186, 200 to 203 (FGEY), arginine 213, and tyrosine 292.

This sequence belongs to the NAD(P)-dependent epimerase/dehydratase family. HldD subfamily. Homopentamer. It depends on NADP(+) as a cofactor.

It catalyses the reaction ADP-D-glycero-beta-D-manno-heptose = ADP-L-glycero-beta-D-manno-heptose. It functions in the pathway nucleotide-sugar biosynthesis; ADP-L-glycero-beta-D-manno-heptose biosynthesis; ADP-L-glycero-beta-D-manno-heptose from D-glycero-beta-D-manno-heptose 7-phosphate: step 4/4. Catalyzes the interconversion between ADP-D-glycero-beta-D-manno-heptose and ADP-L-glycero-beta-D-manno-heptose via an epimerization at carbon 6 of the heptose. The polypeptide is ADP-L-glycero-D-manno-heptose-6-epimerase (Ralstonia nicotianae (strain ATCC BAA-1114 / GMI1000) (Ralstonia solanacearum)).